Consider the following 345-residue polypeptide: Phosphoribosylformylglycinamidine cyclo-ligase (345 aa).

Belongs to the AIR synthase family.

It localises to the cytoplasm. It carries out the reaction 2-formamido-N(1)-(5-O-phospho-beta-D-ribosyl)acetamidine + ATP = 5-amino-1-(5-phospho-beta-D-ribosyl)imidazole + ADP + phosphate + H(+). Its pathway is purine metabolism; IMP biosynthesis via de novo pathway; 5-amino-1-(5-phospho-D-ribosyl)imidazole from N(2)-formyl-N(1)-(5-phospho-D-ribosyl)glycinamide: step 2/2. This chain is Phosphoribosylformylglycinamidine cyclo-ligase, found in Tolumonas auensis (strain DSM 9187 / NBRC 110442 / TA 4).